A 100-amino-acid chain; its full sequence is MICOS complex subunit MIC12 (100 aa).

The helical transmembrane segment at 10–26 (FATISSVAAASLYLYAI) threads the bilayer.

The protein belongs to the MICOS complex subunit Mic12 family. Component of the mitochondrial contact site and cristae organizing system (MICOS) complex.

The protein localises to the mitochondrion inner membrane. Its function is as follows. Component of the MICOS complex, a large protein complex of the mitochondrial inner membrane that plays crucial roles in the maintenance of crista junctions, inner membrane architecture, and formation of contact sites to the outer membrane. This chain is MICOS complex subunit MIC12 (AIM5), found in Vanderwaltozyma polyspora (strain ATCC 22028 / DSM 70294 / BCRC 21397 / CBS 2163 / NBRC 10782 / NRRL Y-8283 / UCD 57-17) (Kluyveromyces polysporus).